A 680-amino-acid polypeptide reads, in one-letter code: DNA ligase (680 aa).

NAD(+)-binding positions include Asp-35–Asp-39, Ser-84–Leu-85, and Glu-115. Residue Lys-117 is the N6-AMP-lysine intermediate of the active site. Residues Arg-138, Glu-174, Lys-291, and Lys-315 each coordinate NAD(+). Zn(2+)-binding residues include Cys-419, Cys-422, Cys-437, and Cys-442. The BRCT domain maps to Asn-601–Ser-680.

It belongs to the NAD-dependent DNA ligase family. LigA subfamily. Mg(2+) serves as cofactor. It depends on Mn(2+) as a cofactor.

The catalysed reaction is NAD(+) + (deoxyribonucleotide)n-3'-hydroxyl + 5'-phospho-(deoxyribonucleotide)m = (deoxyribonucleotide)n+m + AMP + beta-nicotinamide D-nucleotide.. DNA ligase that catalyzes the formation of phosphodiester linkages between 5'-phosphoryl and 3'-hydroxyl groups in double-stranded DNA using NAD as a coenzyme and as the energy source for the reaction. It is essential for DNA replication and repair of damaged DNA. This chain is DNA ligase, found in Dehalococcoides mccartyi (strain ATCC BAA-2100 / JCM 16839 / KCTC 5957 / BAV1).